The primary structure comprises 226 residues: Enolase-phosphatase E1 (226 aa).

Belongs to the HAD-like hydrolase superfamily. MasA/MtnC family. As to quaternary structure, monomer. Mg(2+) serves as cofactor.

It catalyses the reaction 5-methylsulfanyl-2,3-dioxopentyl phosphate + H2O = 1,2-dihydroxy-5-(methylsulfanyl)pent-1-en-3-one + phosphate. It functions in the pathway amino-acid biosynthesis; L-methionine biosynthesis via salvage pathway; L-methionine from S-methyl-5-thio-alpha-D-ribose 1-phosphate: step 3/6. Its pathway is amino-acid biosynthesis; L-methionine biosynthesis via salvage pathway; L-methionine from S-methyl-5-thio-alpha-D-ribose 1-phosphate: step 4/6. Its function is as follows. Bifunctional enzyme that catalyzes the enolization of 2,3-diketo-5-methylthiopentyl-1-phosphate (DK-MTP-1-P) into the intermediate 2-hydroxy-3-keto-5-methylthiopentenyl-1-phosphate (HK-MTPenyl-1-P), which is then dephosphorylated to form the acireductone 1,2-dihydroxy-3-keto-5-methylthiopentene (DHK-MTPene). This is Enolase-phosphatase E1 from Shewanella sp. (strain ANA-3).